Consider the following 56-residue polypeptide: UPF0391 membrane protein PSHAa0537 (56 aa).

Transmembrane regions (helical) follow at residues 6-26 (ITFL…IAGA) and 27-47 (AAGI…ISLV).

This sequence belongs to the UPF0391 family.

Its subcellular location is the cell membrane. In Pseudoalteromonas translucida (strain TAC 125), this protein is UPF0391 membrane protein PSHAa0537.